The chain runs to 394 residues: Cytochrome c oxidase subunit 2, mitochondrial (394 aa).

The transit peptide at 1–119 (ILCPLEAFIV…RNSRLIHSTS (119 aa)) directs the protein to the mitochondrion. Residues 120-181 (KIVPNSEIQN…MQGIIDLHHD (62 aa)) lie on the Mitochondrial intermembrane side of the membrane. Residues 182–198 (IFFFVIQIGVFVSWVLL) form a helical membrane-spanning segment. Residues 199-226 (RALWHFRSKMNPIPQRIVHGTTIEILWT) lie on the Mitochondrial matrix side of the membrane. Residues 227–243 (IFPSVILMFIAIPSFAL) traverse the membrane as a helical segment. At 244–394 (LYSMDDIVVD…YGSWVSSQVN (151 aa)) the chain is on the mitochondrial intermembrane side. His-327, Cys-362, Glu-364, Cys-366, His-370, and Met-373 together coordinate Cu cation. A Mg(2+)-binding site is contributed by Glu-364.

It belongs to the cytochrome c oxidase subunit 2 family. As to quaternary structure, component of the cytochrome c oxidase (complex IV, CIV), a multisubunit enzyme composed of a catalytic core of 3 subunits and several supernumerary subunits. The complex exists as a monomer or a dimer and forms supercomplexes (SCs) in the inner mitochondrial membrane with ubiquinol-cytochrome c oxidoreductase (cytochrome b-c1 complex, complex III, CIII). Cu cation is required as a cofactor.

The protein resides in the mitochondrion inner membrane. It carries out the reaction 4 Fe(II)-[cytochrome c] + O2 + 8 H(+)(in) = 4 Fe(III)-[cytochrome c] + 2 H2O + 4 H(+)(out). In terms of biological role, component of the cytochrome c oxidase, the last enzyme in the mitochondrial electron transport chain which drives oxidative phosphorylation. The respiratory chain contains 3 multisubunit complexes succinate dehydrogenase (complex II, CII), ubiquinol-cytochrome c oxidoreductase (cytochrome b-c1 complex, complex III, CIII) and cytochrome c oxidase (complex IV, CIV), that cooperate to transfer electrons derived from NADH and succinate to molecular oxygen, creating an electrochemical gradient over the inner membrane that drives transmembrane transport and the ATP synthase. Cytochrome c oxidase is the component of the respiratory chain that catalyzes the reduction of oxygen to water. Electrons originating from reduced cytochrome c in the intermembrane space (IMS) are transferred via the dinuclear copper A center (CU(A)) of subunit 2 and heme A of subunit 1 to the active site in subunit 1, a binuclear center (BNC) formed by heme A3 and copper B (CU(B)). The BNC reduces molecular oxygen to 2 water molecules using 4 electrons from cytochrome c in the IMS and 4 protons from the mitochondrial matrix. In Glycine max (Soybean), this protein is Cytochrome c oxidase subunit 2, mitochondrial (COX2).